We begin with the raw amino-acid sequence, 756 residues long: Inactive carboxypeptidase-like protein X2 (756 aa).

The first 25 residues, 1-25 (MSRPGTATPALALVLLAVTLAGVGA), serve as a signal peptide directing secretion. The disordered stretch occupies residues 51 to 131 (EPELETFSPP…DHSVRVARED (81 aa)). Positions 68-78 (EWERRPQEPRP) are enriched in basic and acidic residues. Positions 79-90 (PKRATKPKKAPK) are enriched in basic residues. A compositionally biased stretch (basic and acidic residues) spans 113 to 131 (KSSEKAANDDHSVRVARED). Positions 134 to 293 (ESCPPLGLET…ICMRMEILGC (160 aa)) constitute an F5/8 type C domain. The cysteines at positions 136 and 293 are disulfide-linked. Residues N231, N241, N281, N337, and N491 are each glycosylated (N-linked (GlcNAc...) asparagine). The region spanning 317-640 (KHHNYKEMRQ…ESLIVFMEQV (324 aa)) is the Peptidase M14 domain.

The protein belongs to the peptidase M14 family.

It localises to the secreted. Functionally, may be involved in cell-cell interactions. The polypeptide is Inactive carboxypeptidase-like protein X2 (CPXM2) (Homo sapiens (Human)).